We begin with the raw amino-acid sequence, 214 residues long: Shikimate kinase (214 aa).

35–40 contributes to the ATP binding site; that stretch reads GAGKST. Serine 39 lines the Mg(2+) pocket. Aspartate 57, arginine 81, and glycine 103 together coordinate substrate. Arginine 141 serves as a coordination point for ATP. Residue arginine 160 participates in substrate binding.

It belongs to the shikimate kinase family. As to quaternary structure, monomer. The cofactor is Mg(2+).

Its subcellular location is the cytoplasm. The enzyme catalyses shikimate + ATP = 3-phosphoshikimate + ADP + H(+). Its pathway is metabolic intermediate biosynthesis; chorismate biosynthesis; chorismate from D-erythrose 4-phosphate and phosphoenolpyruvate: step 5/7. Functionally, catalyzes the specific phosphorylation of the 3-hydroxyl group of shikimic acid using ATP as a cosubstrate. This chain is Shikimate kinase, found in Nitrobacter winogradskyi (strain ATCC 25391 / DSM 10237 / CIP 104748 / NCIMB 11846 / Nb-255).